Here is a 439-residue protein sequence, read N- to C-terminus: Maintenance of mitochondrial morphology protein 1 (439 aa).

The Lumenal portion of the chain corresponds to 1-76 (MSQDLIETTA…NGNTWSFTQG (76 aa)). A helical transmembrane segment spans residues 77–97 (LVIGQVSVIFIIIVFVKFFVF). Topologically, residues 98–439 (ADSSSHIPTK…TPGEYVNSNI (342 aa)) are cytoplasmic. Disordered stretches follow at residues 125-145 (KHSN…SLDS), 309-336 (MNGY…DGGT), and 405-425 (REPV…GTSA). The SMP-LTD domain occupies 165–395 (ASESLDWFNV…EPRFQVVRLP (231 aa)). 2 stretches are compositionally biased toward low complexity: residues 315–326 (ENANGDGASSSN) and 410–424 (KKTT…NGTS).

It belongs to the MMM1 family. As to quaternary structure, homodimer. Component of the ER-mitochondria encounter structure (ERMES) or MDM complex, composed of MMM1, MDM10, MDM12 and MDM34. An MMM1 homodimer associates with one molecule of MDM12 on each side in a pairwise head-to-tail manner, and the SMP-LTD domains of MMM1 and MDM12 generate a continuous hydrophobic tunnel for phospholipid trafficking.

The protein localises to the endoplasmic reticulum membrane. Component of the ERMES/MDM complex, which serves as a molecular tether to connect the endoplasmic reticulum (ER) and mitochondria. Components of this complex are involved in the control of mitochondrial shape and protein biogenesis, and function in nonvesicular lipid trafficking between the ER and mitochondria. The MDM12-MMM1 subcomplex functions in the major beta-barrel assembly pathway that is responsible for biogenesis of all outer membrane beta-barrel proteins, and acts in a late step after the SAM complex. The MDM10-MDM12-MMM1 subcomplex further acts in the TOM40-specific pathway after the action of the MDM12-MMM1 complex. Essential for establishing and maintaining the structure of mitochondria and maintenance of mtDNA nucleoids. The protein is Maintenance of mitochondrial morphology protein 1 of Candida albicans (strain WO-1) (Yeast).